The following is a 598-amino-acid chain: Elongation factor 4 (598 aa).

The tr-type G domain occupies 2–184; that stretch reads NRIRNFSIIA…TIVAKLPPPK (183 aa). Residues 14-19 and 131-134 each bind GTP; these read DHGKST and NKID.

Belongs to the TRAFAC class translation factor GTPase superfamily. Classic translation factor GTPase family. LepA subfamily.

Its subcellular location is the cell inner membrane. The enzyme catalyses GTP + H2O = GDP + phosphate + H(+). Functionally, required for accurate and efficient protein synthesis under certain stress conditions. May act as a fidelity factor of the translation reaction, by catalyzing a one-codon backward translocation of tRNAs on improperly translocated ribosomes. Back-translocation proceeds from a post-translocation (POST) complex to a pre-translocation (PRE) complex, thus giving elongation factor G a second chance to translocate the tRNAs correctly. Binds to ribosomes in a GTP-dependent manner. This chain is Elongation factor 4, found in Desulfosudis oleivorans (strain DSM 6200 / JCM 39069 / Hxd3) (Desulfococcus oleovorans).